The primary structure comprises 330 residues: GDP-mannose transporter (330 aa).

Over 1–13 the chain is Cytoplasmic; it reads MSQLKVDNGPLSH. A helical membrane pass occupies residues 14–34; it reads VANSGPISIGAYCFSSIMMTV. The Lumenal portion of the chain corresponds to 35–48; it reads TNKFVVNLKGFNMN. Residues 49–69 form a helical membrane-spanning segment; that stretch reads FVMLFVQAAVCVNLLFFLRLL. Topologically, residues 70 to 81 are cytoplasmic; sequence GYAKFRPLNRTD. A helical membrane pass occupies residues 82–98; it reads AKNWFPITIFLVLMIYT. Residues 99–104 are Lumenal-facing; that stretch reads SSKSLQ. A helical transmembrane segment spans residues 105-124; the sequence is YLAVPIYTIFKNLTIILIAY. Residues 125–138 are Cytoplasmic-facing; it reads GEVLFFGGSVTAME. Residues 139–155 traverse the membrane as a helical segment; that stretch reads LSSFLLMVLSSVVATLG. At 156–170 the chain is on the lumenal side; that stretch reads DQQALKKTADAGASL. The helical transmembrane segment at 171 to 191 threads the bilayer; the sequence is FNIGYMWMFINCLSSAAFVLV. At 192–203 the chain is on the cytoplasmic side; sequence MRKRIKLTNFKD. The chain crosses the membrane as a helical span at residues 204–224; sequence FDTMFYNNILSMPVLLALSFL. Topologically, residues 225 to 241 are lumenal; sequence MEDWSTENLTKNLSRDS. Residues 242-262 traverse the membrane as a helical segment; sequence VTAMIISGMTAVCISYCSGWC. Residues 263–269 lie on the Cytoplasmic side of the membrane; that stretch reads VRVTSST. A helical transmembrane segment spans residues 270-290; sequence TYSMVGALNKLPIALSGLIFF. Residues 291 to 294 lie on the Lumenal side of the membrane; that stretch reads DAPK. A helical transmembrane segment spans residues 295 to 315; that stretch reads NFLSIFSIFLGFLSGIVYAVA. At 316–330 the chain is on the cytoplasmic side; the sequence is KQKKQQNPQPSAPIK.

It belongs to the TPT transporter family. SLC35D subfamily. Homooligomer.

The protein localises to the golgi apparatus membrane. Its subcellular location is the cytoplasmic vesicle membrane. It is found in the endoplasmic reticulum membrane. Functionally, involved in the import of GDP-mannose from the cytoplasm into the Golgi lumen. This chain is GDP-mannose transporter (VRG4), found in Kluyveromyces lactis (strain ATCC 8585 / CBS 2359 / DSM 70799 / NBRC 1267 / NRRL Y-1140 / WM37) (Yeast).